A 574-amino-acid chain; its full sequence is Lengsin (574 aa).

Disordered stretches follow at residues 1-36 (MNDEGDLLQENTRDEGNETEASRMSKLRRTRKKVTK) and 66-131 (GNMS…IPTT). Residues 11-23 (NTRDEGNETEASR) are compositionally biased toward basic and acidic residues. Residues 25-36 (SKLRRTRKKVTK) show a composition bias toward basic residues. Residues 91–131 (NQTTVIKPSPLKTSASAPCSEFNTNSNHADNTWEDTQIPTT) show a composition bias toward polar residues. Residues 148-242 (NHLQFVRFEA…VICDTFTVTG (95 aa)) enclose the GS beta-grasp domain. One can recognise a GS catalytic domain in the interval 249-574 (PRYIAKRQLS…ERNKFLEYFI (326 aa)).

The protein belongs to the glutamine synthetase family. In terms of assembly, dodecamer. Interacts with BFSP2 and VIM.

Functionally, may act as a component of the cytoskeleton or as a chaperone for the reorganization of intermediate filament proteins during terminal differentiation in the lens. Does not seem to have enzymatic activity. This chain is Lengsin (LGSN), found in Canis lupus familiaris (Dog).